A 796-amino-acid polypeptide reads, in one-letter code: Protein SEY1 homolog (796 aa).

At 1–701 the chain is on the cytoplasmic side; that stretch reads MESSNDFSNK…AGTSISSWRN (701 aa). The 235-residue stretch at 46-280 folds into the GB1/RHD3-type G domain; that stretch reads GFRFNVVTIL…VPSDGFFVYS (235 aa). Residue 56–63 coordinates GTP; it reads GSQSSGKS. A coiled-coil region spans residues 554 to 626; that stretch reads SLVLLLKAAR…DALTLLKVLK (73 aa). A helical membrane pass occupies residues 702-722; that stretch reads IPPIFWLVLLVLGWNELRSVF. At 723-725 the chain is on the lumenal side; the sequence is KVL. A helical membrane pass occupies residues 726–746; that stretch reads LRFYVVIPLLIVFYFTFSYSA. The Cytoplasmic portion of the chain corresponds to 747-796; sequence TKLLGPKADQYVKPVRDKVLSLFTALLAWFVRTLHMIASKSSSFKQRPAT.

Belongs to the TRAFAC class dynamin-like GTPase superfamily. GB1/RHD3 GTPase family. RHD3 subfamily.

The protein localises to the endoplasmic reticulum membrane. Functionally, probable GTP-binding protein that may be involved in cell development. This chain is Protein SEY1 homolog, found in Theileria parva (East coast fever infection agent).